Reading from the N-terminus, the 262-residue chain is Indole-3-glycerol phosphate synthase (262 aa).

Belongs to the TrpC family.

The catalysed reaction is 1-(2-carboxyphenylamino)-1-deoxy-D-ribulose 5-phosphate + H(+) = (1S,2R)-1-C-(indol-3-yl)glycerol 3-phosphate + CO2 + H2O. The protein operates within amino-acid biosynthesis; L-tryptophan biosynthesis; L-tryptophan from chorismate: step 4/5. The chain is Indole-3-glycerol phosphate synthase from Nitratiruptor sp. (strain SB155-2).